The primary structure comprises 233 residues: Small ribosomal subunit protein uS3 (233 aa).

Residues 39-107 (IRTFLKRKLY…EVNINIKEER (69 aa)) form the KH type-2 domain. The segment at 211–233 (GVQPEKTEESAPAKKPRRARRGK) is disordered. The span at 213–222 (QPEKTEESAP) shows a compositional bias: basic and acidic residues. Positions 224 to 233 (KKPRRARRGK) are enriched in basic residues.

It belongs to the universal ribosomal protein uS3 family. Part of the 30S ribosomal subunit. Forms a tight complex with proteins S10 and S14.

In terms of biological role, binds the lower part of the 30S subunit head. Binds mRNA in the 70S ribosome, positioning it for translation. The sequence is that of Small ribosomal subunit protein uS3 from Campylobacter lari (strain RM2100 / D67 / ATCC BAA-1060).